We begin with the raw amino-acid sequence, 252 residues long: Orotidine 5'-phosphate decarboxylase (252 aa).

Residues aspartate 24, lysine 46, 73–82 (DLKFHDIPNT), threonine 137, arginine 199, glutamine 208, glycine 228, and arginine 229 contribute to the substrate site. The active-site Proton donor is lysine 75.

Belongs to the OMP decarboxylase family. Type 1 subfamily. Homodimer.

The enzyme catalyses orotidine 5'-phosphate + H(+) = UMP + CO2. It participates in pyrimidine metabolism; UMP biosynthesis via de novo pathway; UMP from orotate: step 2/2. Functionally, catalyzes the decarboxylation of orotidine 5'-monophosphate (OMP) to uridine 5'-monophosphate (UMP). The sequence is that of Orotidine 5'-phosphate decarboxylase from Moorella thermoacetica (strain ATCC 39073 / JCM 9320).